The following is a 225-amino-acid chain: PKHD-type hydroxylase YbiX (225 aa).

Residues 78–177 (TLSTPLFNRY…RVASFMWIQS (100 aa)) enclose the Fe2OG dioxygenase domain. Positions 96, 98, and 158 each coordinate Fe cation. Arg-168 contributes to the 2-oxoglutarate binding site.

Requires Fe(2+) as cofactor. L-ascorbate is required as a cofactor.

The chain is PKHD-type hydroxylase YbiX from Escherichia coli (strain 55989 / EAEC).